Reading from the N-terminus, the 302-residue chain is Negative regulator of the PHO system (302 aa).

Residues 6–296 form the Protein kinase domain; that stretch reads FKQLEKLGNG…AKQALLHPWF (291 aa). Residues 12–20 and K35 contribute to the ATP site; that span reads LGNGTYATV. Catalysis depends on D132, which acts as the Proton acceptor.

This sequence belongs to the protein kinase superfamily. CMGC Ser/Thr protein kinase family. CDC2/CDKX subfamily. Interacts with a number of cyclins.

The catalysed reaction is L-seryl-[protein] + ATP = O-phospho-L-seryl-[protein] + ADP + H(+). The enzyme catalyses L-threonyl-[protein] + ATP = O-phospho-L-threonyl-[protein] + ADP + H(+). When phosphate concentrations are high it phosphorylates the PHO4 transcription factor thus establishing repression. This is Negative regulator of the PHO system (PHO85) from Candida glabrata (strain ATCC 2001 / BCRC 20586 / JCM 3761 / NBRC 0622 / NRRL Y-65 / CBS 138) (Yeast).